The following is a 159-amino-acid chain: Ribosomal RNA large subunit methyltransferase H (159 aa).

Residues Leu76, Gly108, and 127–132 each bind S-adenosyl-L-methionine; that span reads FSPMTF.

The protein belongs to the RNA methyltransferase RlmH family. In terms of assembly, homodimer.

Its subcellular location is the cytoplasm. The enzyme catalyses pseudouridine(1915) in 23S rRNA + S-adenosyl-L-methionine = N(3)-methylpseudouridine(1915) in 23S rRNA + S-adenosyl-L-homocysteine + H(+). Specifically methylates the pseudouridine at position 1915 (m3Psi1915) in 23S rRNA. This is Ribosomal RNA large subunit methyltransferase H from Alkaliphilus metalliredigens (strain QYMF).